A 645-amino-acid chain; its full sequence is Chaperone protein DnaK (645 aa).

Thr-201 is subject to Phosphothreonine; by autocatalysis. Residues 606–629 show a composition bias toward low complexity; that stretch reads NTNNATAGDNNTTDTGSSSNSDGS. The interval 606–645 is disordered; the sequence is NTNNATAGDNNTTDTGSSSNSDGSKVVDSDYQEIDKKDGK. Residues 630–645 are compositionally biased toward basic and acidic residues; that stretch reads KVVDSDYQEIDKKDGK.

This sequence belongs to the heat shock protein 70 family.

Acts as a chaperone. The protein is Chaperone protein DnaK of Ehrlichia ruminantium (strain Welgevonden).